Here is a 110-residue protein sequence, read N- to C-terminus: Nucleoid-associated protein bbp_426 (110 aa).

Belongs to the YbaB/EbfC family. Homodimer.

It localises to the cytoplasm. The protein localises to the nucleoid. Its function is as follows. Binds to DNA and alters its conformation. May be involved in regulation of gene expression, nucleoid organization and DNA protection. In Buchnera aphidicola subsp. Baizongia pistaciae (strain Bp), this protein is Nucleoid-associated protein bbp_426.